Consider the following 326-residue polypeptide: Glutaredoxin 3 (326 aa).

A Thioredoxin domain is found at 1–108 (MANFTDAASL…LTNKVQRLGS (108 aa)). Glutaredoxin domains lie at 125–227 (NQRL…VSLE) and 227–326 (ENRL…KGEN). Residues Cys-150 and Cys-252 each coordinate [2Fe-2S] cluster.

Homodimer; the homodimer is independent of 2Fe-2S clusters. Heterotrimer; forms a heterotrimeric complex composed by two bola2 molecules and one glrx3 molecule; linked by [2Fe-2S] clusters.

The protein resides in the cytoplasm. Its subcellular location is the cytosol. Functionally, together with bola2, acts as a cytosolic iron-sulfur (Fe-S) cluster assembly factor that facilitates [2Fe-2S] cluster insertion into a subset of cytosolic proteins. Required for hemoglobin maturation. Does not possess any thyoredoxin activity since it lacks the conserved motif that is essential for catalytic activity. The sequence is that of Glutaredoxin 3 (glrx3) from Danio rerio (Zebrafish).